A 577-amino-acid chain; its full sequence is Adenine deaminase (577 aa).

The protein belongs to the metallo-dependent hydrolases superfamily. Adenine deaminase family. Mn(2+) is required as a cofactor.

The enzyme catalyses adenine + H2O + H(+) = hypoxanthine + NH4(+). The sequence is that of Adenine deaminase (adeC) from Bacillus subtilis (strain 168).